The chain runs to 321 residues: MTKYALVGDVGGTNARLALCDIASGEISQAKTYSGLDYPSLEAVIRVYLEEHKVEVKDGCIAIACPITGDWVAMTNHTWAFSIAEMKKNLGFSHLEIINDFTAVSMAIPMLKKEHLIQFGGAEPVEGKPIAVYGAGTGLGVAHLVHVDKRWVSLPGEGGHVDFAPNSEEEAIILEILRAEIGHVSAERVLSGPGLVNLYRAIVKADNRLPENLKPKDITERALADSCTDCRRALSLFCVIMGRFGGNLALNLGTFGGVFIAGGIVPRFLEFFKASGFRAAFEDKGRFKEYVHDIPVYLIVHDYPGLLGSGAHLRQTLGHIL.

Residue G8–T13 participates in ATP binding.

It belongs to the bacterial glucokinase family.

It is found in the cytoplasm. It carries out the reaction D-glucose + ATP = D-glucose 6-phosphate + ADP + H(+). The sequence is that of Glucokinase from Shigella flexneri serotype 5b (strain 8401).